Here is a 536-residue protein sequence, read N- to C-terminus: 3',5'-cyclic-AMP phosphodiesterase 4C (536 aa).

The segment at 49-69 is disordered; sequence QALLGTPPQSSQQAAPAEESG. Residues 178–507 form the PDEase domain; the sequence is VQTDQEEQLA…EWYQSRVPCS (330 aa). Catalysis depends on H254, which acts as the Proton donor. H254 is a binding site for 3',5'-cyclic AMP. AMP contacts are provided by H254 and H258. H258, H294, D295, and D412 together coordinate Zn(2+). Residues D295, D412, Q463, and F466 each coordinate AMP. D295 contributes to the Mg(2+) binding site. D295 serves as a coordination point for Mn(2+). Positions 463 and 466 each coordinate 3',5'-cyclic AMP. S507 bears the Phosphoserine mark.

The protein belongs to the cyclic nucleotide phosphodiesterase family. PDE4 subfamily. In terms of assembly, part of a complex containing AKAP5, ADCY5, ADCY6 and PKD2. The cofactor is Zn(2+). It depends on Mg(2+) as a cofactor. Requires Mn(2+) as cofactor.

Its subcellular location is the cell projection. The protein resides in the cilium. It carries out the reaction 3',5'-cyclic AMP + H2O = AMP + H(+). The protein operates within purine metabolism; 3',5'-cyclic AMP degradation; AMP from 3',5'-cyclic AMP: step 1/1. In terms of biological role, hydrolyzes the second messenger cAMP, which is a key regulator of many important physiological processes. The sequence is that of 3',5'-cyclic-AMP phosphodiesterase 4C from Rattus norvegicus (Rat).